A 629-amino-acid chain; its full sequence is Replication protein A 70 kDa DNA-binding subunit D (629 aa).

The tract at residues 112-135 (LDSKSGEEEAREPKKQKLEHSPVS) is disordered. Over residues 115-131 (KSGEEEAREPKKQKLEH) the composition is skewed to basic and acidic residues. The segment at residues 194 to 280 (WTIKVRVTNK…QNDYEMTLNE (87 aa)) is a DNA-binding region (OB). Residues 492–512 (CKTCNKKVTEALDSGYWCEGC) form a C4-type zinc finger.

Belongs to the replication factor A protein 1 family. As to quaternary structure, heterotrimer of RPA1, RPA2 and RPA3 (canonical replication protein A complex).

It is found in the nucleus. Its function is as follows. Component of the replication protein A complex (RPA) required for DNA recombination, repair and replication. The activity of RPA is mediated by single-stranded DNA binding and protein interactions. Probably involved in repair of double-strand DNA breaks (DSBs) induced by genotoxic stresses. In Arabidopsis thaliana (Mouse-ear cress), this protein is Replication protein A 70 kDa DNA-binding subunit D (RPA1D).